The sequence spans 740 residues: Ion-translocating oxidoreductase complex subunit C (740 aa).

4Fe-4S ferredoxin-type domains lie at 369–397 and 407–436; these read GEPQ…QQLY and KATT…VQYF. 8 residues coordinate [4Fe-4S] cluster: cysteine 377, cysteine 380, cysteine 383, cysteine 387, cysteine 416, cysteine 419, cysteine 422, and cysteine 426. 3 disordered regions span residues 602 to 652, 664 to 685, and 695 to 714; these read KLEQ…DPRK, ARKL…PRKA, and KARK…QVDP. A compositionally biased stretch (low complexity) spans 605 to 615; it reads QQQANAEPEQQ.

This sequence belongs to the 4Fe4S bacterial-type ferredoxin family. RnfC subfamily. The complex is composed of six subunits: RsxA, RsxB, RsxC, RsxD, RsxE and RsxG. [4Fe-4S] cluster serves as cofactor.

It is found in the cell inner membrane. Part of a membrane-bound complex that couples electron transfer with translocation of ions across the membrane. Required to maintain the reduced state of SoxR. This chain is Ion-translocating oxidoreductase complex subunit C, found in Escherichia coli O157:H7.